The primary structure comprises 56 residues: uncharacterized protein (56 aa).

This is an uncharacterized protein from Thermoproteus tenax virus 1 (strain KRA1) (TTV1).